The primary structure comprises 190 residues: MIRFEIHGDNLTITDAIRNYIEEKIGKLERYFNDVPNAVAHVKVKTYSNSATKIEVTIPLKNVTLRAEERNDDLYAGIDLINNKLERQVRKYKTRINRKSRDRGDQEVFVAELQEMQETQVDNDAYDDNEIEIIRSKEFSLKPMDSEEAVLQMNLLGHDFFVFTDRETDGTSIVYRRKDGKYGLIQTSEQ.

The tract at residues 101–190 (RDRGDQEVFV…KYGLIQTSEQ (90 aa)) is required for ribosome-binding.

It belongs to the HPF/YfiA ribosome-associated protein family. Long HPF subfamily. Interacts with 100S ribosomes during exponential growth, as 100S ribosomes decrease (after 28 hours) also found associated with 30s and 50S subunits.

It is found in the cytoplasm. Required and sufficient for dimerization of active 70S ribosomes into 100S ribosomes. 110S ribosomes are probably translationally inactive and may serve as a reservoir of easily reactivated ribosomes when necessary in the cell. Also reduces the translation efficiency of a small number of genes. Unlike E.coli, 100S ribosomes are present during exponential growth and decrease during stationary phase. This strain produces 30% fewer 100S ribosomes than strain N315 and RN4200 under the same growth conditions. In Staphylococcus aureus (strain USA300), this protein is Ribosome hibernation promotion factor.